We begin with the raw amino-acid sequence, 161 residues long: NADH-quinone oxidoreductase subunit I (161 aa).

4Fe-4S ferredoxin-type domains are found at residues 52–82 (LRRYPDGEERCIACKLCEAICPAQAITIEAK) and 92–121 (TKYDIDMTKCIYCGLCQEACPVDAIVEGPN). Cys62, Cys65, Cys68, Cys72, Cys101, Cys104, Cys107, and Cys111 together coordinate [4Fe-4S] cluster.

This sequence belongs to the complex I 23 kDa subunit family. In terms of assembly, NDH-1 is composed of 14 different subunits. Subunits NuoA, H, J, K, L, M, N constitute the membrane sector of the complex. The cofactor is [4Fe-4S] cluster.

The protein resides in the cell inner membrane. The catalysed reaction is a quinone + NADH + 5 H(+)(in) = a quinol + NAD(+) + 4 H(+)(out). Its function is as follows. NDH-1 shuttles electrons from NADH, via FMN and iron-sulfur (Fe-S) centers, to quinones in the respiratory chain. The immediate electron acceptor for the enzyme in this species is believed to be ubiquinone. Couples the redox reaction to proton translocation (for every two electrons transferred, four hydrogen ions are translocated across the cytoplasmic membrane), and thus conserves the redox energy in a proton gradient. The sequence is that of NADH-quinone oxidoreductase subunit I from Orientia tsutsugamushi (strain Boryong) (Rickettsia tsutsugamushi).